Here is a 433-residue protein sequence, read N- to C-terminus: Glutamate-1-semialdehyde 2,1-aminomutase (433 aa).

Residue Lys-271 is modified to N6-(pyridoxal phosphate)lysine.

This sequence belongs to the class-III pyridoxal-phosphate-dependent aminotransferase family. HemL subfamily. Homodimer. It depends on pyridoxal 5'-phosphate as a cofactor.

The protein localises to the cytoplasm. The catalysed reaction is (S)-4-amino-5-oxopentanoate = 5-aminolevulinate. The protein operates within porphyrin-containing compound metabolism; protoporphyrin-IX biosynthesis; 5-aminolevulinate from L-glutamyl-tRNA(Glu): step 2/2. It functions in the pathway porphyrin-containing compound metabolism; chlorophyll biosynthesis. This chain is Glutamate-1-semialdehyde 2,1-aminomutase, found in Prochlorococcus marinus subsp. pastoris (strain CCMP1986 / NIES-2087 / MED4).